A 735-amino-acid chain; its full sequence is DNA replication licensing factor mcm5-B (735 aa).

Residues 332 to 538 enclose the MCM domain; it reads IYETVAKSIA…RDMTLAKHVM (207 aa). Arg372 is an ADP binding site. Residues 513–516 carry the Arginine finger motif; the sequence is SRFD.

Belongs to the MCM family. Component of the mcm2-7 complex (RLF-M). The complex forms a toroidal hexameric ring with the proposed subunit order mcm2-mcm6-mcm4-mcm7-mcm3-mcm5. The heterodimer of mmcm3/mcm5 interacts with mcm4, mmcm6, mcm7 and weakly with mcm2. Component of the CMG helicase complex, composed of the mcm2-7 complex, the GINS complex and cdc45.

The protein resides in the nucleus. The protein localises to the chromosome. It catalyses the reaction ATP + H2O = ADP + phosphate + H(+). Acts as a component of the MCM2-7 complex (MCM complex) which is the replicative helicase essential for 'once per cell cycle' DNA replication initiation and elongation in eukaryotic cells. Core component of CDC45-MCM-GINS (CMG) helicase, the molecular machine that unwinds template DNA during replication, and around which the replisome is built. The active ATPase sites in the MCM2-7 ring are formed through the interaction surfaces of two neighboring subunits such that a critical structure of a conserved arginine finger motif is provided in trans relative to the ATP-binding site of the Walker A box of the adjacent subunit. The six ATPase active sites, however, are likely to contribute differentially to the complex helicase activity. The sequence is that of DNA replication licensing factor mcm5-B (mcm5-b) from Xenopus laevis (African clawed frog).